We begin with the raw amino-acid sequence, 20 residues long: Pregnancy-associated glycoprotein 67A (20 aa).

2 N-linked (GlcNAc...) asparagine glycosylation sites follow: Asn-4 and Asn-20.

This sequence belongs to the peptidase A1 family. In terms of tissue distribution, chorionic epithelium (trophectoderm) and placental cotyledons.

It localises to the secreted. It is found in the extracellular space. This Bison bonasus (European bison) protein is Pregnancy-associated glycoprotein 67A.